We begin with the raw amino-acid sequence, 475 residues long: Ribulose bisphosphate carboxylase large chain (475 aa).

The propeptide occupies Met-1–Ser-2. An N-acetylproline modification is found at Pro-3. Lys-14 is modified (N6,N6,N6-trimethyllysine). The substrate site is built by Asn-123 and Thr-173. The active-site Proton acceptor is the Lys-175. Lys-177 is a binding site for substrate. Lys-201, Asp-203, and Glu-204 together coordinate Mg(2+). Lys-201 carries the N6-carboxylysine modification. His-294 (proton acceptor) is an active-site residue. 3 residues coordinate substrate: Arg-295, His-327, and Ser-379.

This sequence belongs to the RuBisCO large chain family. Type I subfamily. As to quaternary structure, heterohexadecamer of 8 large chains and 8 small chains; disulfide-linked. The disulfide link is formed within the large subunit homodimers. Mg(2+) serves as cofactor. In terms of processing, the disulfide bond which can form in the large chain dimeric partners within the hexadecamer appears to be associated with oxidative stress and protein turnover.

It is found in the plastid. The protein resides in the chloroplast. The catalysed reaction is 2 (2R)-3-phosphoglycerate + 2 H(+) = D-ribulose 1,5-bisphosphate + CO2 + H2O. It carries out the reaction D-ribulose 1,5-bisphosphate + O2 = 2-phosphoglycolate + (2R)-3-phosphoglycerate + 2 H(+). RuBisCO catalyzes two reactions: the carboxylation of D-ribulose 1,5-bisphosphate, the primary event in carbon dioxide fixation, as well as the oxidative fragmentation of the pentose substrate in the photorespiration process. Both reactions occur simultaneously and in competition at the same active site. This chain is Ribulose bisphosphate carboxylase large chain, found in Fagopyrum esculentum subsp. ancestrale (Wild buckwheat).